Here is a 622-residue protein sequence, read N- to C-terminus: Auxin response factor 11 (622 aa).

The TF-B3 DNA-binding region spans 145-247 (FVKILTASDT…DLRVGVRRLA (103 aa)). Disordered regions lie at residues 358–398 (SIQR…ISEI) and 483–513 (SNISDSTTKCQDPNSSNSPKEQKQQTSTRSR). 2 stretches are compositionally biased toward polar residues: residues 376–387 (SALTPTPTQQQS) and 483–511 (SNISDSTTKCQDPNSSNSPKEQKQQTSTR). The PB1 domain maps to 511-594 (RSRIKVQMQG…KKLFIYPSDE (84 aa)).

The protein belongs to the ARF family. Homodimers and heterodimers.

Its subcellular location is the nucleus. In terms of biological role, auxin response factors (ARFs) are transcriptional factors that bind specifically to the DNA sequence 5'-TGTCTC-3' found in the auxin-responsive promoter elements (AuxREs). Could act as transcriptional activator or repressor. Formation of heterodimers with Aux/IAA proteins may alter their ability to modulate early auxin response genes expression. This is Auxin response factor 11 (ARF11) from Arabidopsis thaliana (Mouse-ear cress).